A 914-amino-acid chain; its full sequence is Neuropilin-1 (914 aa).

A signal peptide spans Met-1–Arg-18. Over Leu-20–Pro-847 the chain is Extracellular. Intrachain disulfides connect Cys-25/Cys-52, Cys-80/Cys-102, and Cys-145/Cys-171. 2 consecutive CUB domains span residues Cys-25–Phe-139 and Cys-145–Ser-263. N-linked (GlcNAc...) asparagine glycosylation occurs at Asn-148. Positions 193, 207, and 248 each coordinate Ca(2+). The cysteines at positions 204 and 226 are disulfide-linked. N-linked (GlcNAc...) asparagine glycosylation occurs at Asn-259. Disulfide bonds link Cys-273-Cys-422 and Cys-429-Cys-581. F5/8 type C domains lie at Cys-273–Cys-422 and Cys-429–Cys-581. The N-linked (GlcNAc...) asparagine glycan is linked to Asn-520. A glycan (O-linked (Xyl...) (chondroitin sulfate) serine; alternate) is linked at Ser-610. Ser-610 is a glycosylation site (O-linked (Xyl...) (heparan sulfate) serine; alternate). The MAM domain occupies Pro-636 to Lys-801. Residues Ile-809 to Glu-829 form a disordered region. Over residues Ser-816–Tyr-825 the composition is skewed to polar residues. Asn-817 is a glycosylation site (N-linked (GlcNAc...) asparagine). Residues Ile-848–Leu-870 form a helical membrane-spanning segment. The Cytoplasmic segment spans residues Tyr-871–Ala-914.

This sequence belongs to the neuropilin family. Homodimer, and heterodimer. In terms of tissue distribution, developing nervous system; optic tectum (layers D and E of SGFS), amacrine cells of retina, neurites of dorsal root ganglia. Also expressed in non-neuronal cells, e.g. blood vessels in the entire embryo.

It is found in the mitochondrion membrane. The protein resides in the cell membrane. Its function is as follows. Receptor involved in the development of the cardiovascular system, in angiogenesis, in the formation of certain neuronal circuits and in organogenesis outside the nervous system. Mediates the chemorepulsant activity of semaphorins. Binding to VEGFA initiates a signaling pathway needed for motor neuron axon guidance and cell body migration, including for the caudal migration of facial motor neurons from rhombomere 4 to rhombomere 6 during embryonic development. Regulates mitochondrial iron transport via interaction. This Gallus gallus (Chicken) protein is Neuropilin-1 (NRP1).